A 390-amino-acid chain; its full sequence is Putative cyclin-F2-1 (390 aa).

The tract at residues 135–154 (YNGDDDAPAPDDSMASRPQL) is disordered.

The protein belongs to the cyclin family. Cyclin F subfamily.

This chain is Putative cyclin-F2-1 (CycF2-1), found in Oryza sativa subsp. japonica (Rice).